The chain runs to 238 residues: Aspartate/glutamate leucyltransferase (238 aa).

It belongs to the R-transferase family. Bpt subfamily.

It localises to the cytoplasm. It carries out the reaction N-terminal L-glutamyl-[protein] + L-leucyl-tRNA(Leu) = N-terminal L-leucyl-L-glutamyl-[protein] + tRNA(Leu) + H(+). It catalyses the reaction N-terminal L-aspartyl-[protein] + L-leucyl-tRNA(Leu) = N-terminal L-leucyl-L-aspartyl-[protein] + tRNA(Leu) + H(+). Its function is as follows. Functions in the N-end rule pathway of protein degradation where it conjugates Leu from its aminoacyl-tRNA to the N-termini of proteins containing an N-terminal aspartate or glutamate. In Shewanella oneidensis (strain ATCC 700550 / JCM 31522 / CIP 106686 / LMG 19005 / NCIMB 14063 / MR-1), this protein is Aspartate/glutamate leucyltransferase.